Consider the following 427-residue polypeptide: Glutamate-1-semialdehyde 2,1-aminomutase (427 aa).

Lys265 bears the N6-(pyridoxal phosphate)lysine mark.

It belongs to the class-III pyridoxal-phosphate-dependent aminotransferase family. HemL subfamily. Homodimer. Pyridoxal 5'-phosphate serves as cofactor.

Its subcellular location is the cytoplasm. The catalysed reaction is (S)-4-amino-5-oxopentanoate = 5-aminolevulinate. It functions in the pathway porphyrin-containing compound metabolism; protoporphyrin-IX biosynthesis; 5-aminolevulinate from L-glutamyl-tRNA(Glu): step 2/2. This chain is Glutamate-1-semialdehyde 2,1-aminomutase, found in Actinobacillus succinogenes (strain ATCC 55618 / DSM 22257 / CCUG 43843 / 130Z).